The chain runs to 318 residues: Ribonuclease Z (318 aa).

Zn(2+) contacts are provided by H63, H65, D67, H68, H142, D213, and H273. The Proton acceptor role is filled by D67.

The protein belongs to the RNase Z family. Homodimer. Zn(2+) serves as cofactor.

The catalysed reaction is Endonucleolytic cleavage of RNA, removing extra 3' nucleotides from tRNA precursor, generating 3' termini of tRNAs. A 3'-hydroxy group is left at the tRNA terminus and a 5'-phosphoryl group is left at the trailer molecule.. In terms of biological role, zinc phosphodiesterase, which displays some tRNA 3'-processing endonuclease activity. Probably involved in tRNA maturation, by removing a 3'-trailer from precursor tRNA. The sequence is that of Ribonuclease Z from Leuconostoc mesenteroides subsp. mesenteroides (strain ATCC 8293 / DSM 20343 / BCRC 11652 / CCM 1803 / JCM 6124 / NCDO 523 / NBRC 100496 / NCIMB 8023 / NCTC 12954 / NRRL B-1118 / 37Y).